Here is a 204-residue protein sequence, read N- to C-terminus: Large ribosomal subunit protein eL15 (204 aa).

Belongs to the eukaryotic ribosomal protein eL15 family.

The chain is Large ribosomal subunit protein eL15 (RpL15) from Chironomus tentans (Midge).